The chain runs to 77 residues: Acyl carrier protein (77 aa).

Positions 1-76 (MATFDDVKAV…DVVNYIDNLK (76 aa)) constitute a Carrier domain. Position 36 is an O-(pantetheine 4'-phosphoryl)serine (Ser36).

Belongs to the acyl carrier protein (ACP) family. Post-translationally, 4'-phosphopantetheine is transferred from CoA to a specific serine of apo-ACP by AcpS. This modification is essential for activity because fatty acids are bound in thioester linkage to the sulfhydryl of the prosthetic group.

Its subcellular location is the cytoplasm. It functions in the pathway lipid metabolism; fatty acid biosynthesis. Its function is as follows. Carrier of the growing fatty acid chain in fatty acid biosynthesis. The polypeptide is Acyl carrier protein (Campylobacter jejuni subsp. jejuni serotype O:6 (strain 81116 / NCTC 11828)).